Consider the following 284-residue polypeptide: 4-diphosphocytidyl-2-C-methyl-D-erythritol kinase (284 aa).

Lysine 14 is an active-site residue. 98–108 is an ATP binding site; sequence PMGGGIGGGSS. Aspartate 140 is a catalytic residue.

This sequence belongs to the GHMP kinase family. IspE subfamily.

The catalysed reaction is 4-CDP-2-C-methyl-D-erythritol + ATP = 4-CDP-2-C-methyl-D-erythritol 2-phosphate + ADP + H(+). Its pathway is isoprenoid biosynthesis; isopentenyl diphosphate biosynthesis via DXP pathway; isopentenyl diphosphate from 1-deoxy-D-xylulose 5-phosphate: step 3/6. Catalyzes the phosphorylation of the position 2 hydroxy group of 4-diphosphocytidyl-2C-methyl-D-erythritol. The chain is 4-diphosphocytidyl-2-C-methyl-D-erythritol kinase from Shewanella loihica (strain ATCC BAA-1088 / PV-4).